A 162-amino-acid chain; its full sequence is MAQLPLSPAPQRPETKTPGKPEAELIPKPLLRAMIGIALLSLALTTYAVLTGRPHEGVPAPGKVVAEKLVVLKDIDARHATVSDPEGNILLDLPEGGFVDVMAAAVRRSRAVARITDNPPVRIVRYDNGRLAMEDPATGWSTELYAFGADSKAAFERILDMK.

The segment at 1–23 (MAQLPLSPAPQRPETKTPGKPEA) is disordered. Residues 13–23 (PETKTPGKPEA) are compositionally biased toward basic and acidic residues.

This is an uncharacterized protein from Rhodobacter capsulatus (Rhodopseudomonas capsulata).